We begin with the raw amino-acid sequence, 389 residues long: Gastricsin (389 aa).

The signal sequence occupies residues methionine 1 to alanine 16. Residues lysine 17–phenylalanine 59 constitute a propeptide, activation peptide. The Peptidase A1 domain maps to tyrosine 73–alanine 386. Aspartate 91 is an active-site residue. 2 cysteine pairs are disulfide-bonded: cysteine 104/cysteine 109 and cysteine 268/cysteine 272. The active site involves aspartate 277. A disulfide bridge links cysteine 311 with cysteine 344.

Belongs to the peptidase A1 family.

Its subcellular location is the secreted. It carries out the reaction More restricted specificity than pepsin A, but shows preferential cleavage at Tyr-|-Xaa bonds. High activity on hemoglobin.. In terms of biological role, hydrolyzes a variety of proteins. The protein is Gastricsin (PGC) of Rhinolophus ferrumequinum (Greater horseshoe bat).